A 409-amino-acid polypeptide reads, in one-letter code: Diels-Alderase ucsH (409 aa).

A helical membrane pass occupies residues 386 to 406; sequence IYFFICMLLAVVTFGYINILE.

This sequence belongs to the Diels-Alderase family.

The protein resides in the membrane. It participates in mycotoxin biosynthesis. Functionally, diels-Alderase; part of the gene cluster that mediates the biosynthesis of UCS1025A, a member of the pyrrolizidinone family that acts as a strong telomerase inhibitor and displays potent antibacterial and antitumor properties. These compounds share a hemiaminal-containing pyrrolizidinone core fused with a gamma-lactone, giving a furopyrrolizidine that is connected to a decalin fragment. The polyketide synthase module (PKS) of the PKS-NRPS ucsA is responsible for the synthesis of the polyketide backbone via the condensation of an acetyl-CoA starter unit with 6 malonyl-CoA units. The downstream nonribosomal peptide synthetase (NRPS) module then amidates the carboxyl end of the polyketide with a 2S,3S-methylproline derived from L-isoleucine by the 2-oxoglutarate-dependent dioxygenase ucsF which converts L-isoleucine to (4S,5S)-4-methylpyrroline-5-carboxylate that is further converted to 2S,3S-methylproline by the pyrroline-5-carboxylate reductase ucsG. Reductive release of the completed aminoacyl polyketide from the assembly line can form the 3-pyrrolin-2-one structure via an intramolecular Knoevenagel reaction. Because ucsA lacks a designated enoylreductase (ER) domain, the required activity is provided the enoyl reductase ucsL. This keto acyclic precursor is the substrate of the Diels-Alderase ucsH, that catalyzes the Diels-Alder cycloaddition. Oxidation of the 3S-methyl group to a carboxylate by the cytochrome P450 monooxygenase ucsK allows an oxa-Michael cyclization that might involve the reductase/dehydrogenase ucsI and which furnishes the furopyrrolizidine. The oxidase ucsJ likely plays a critical role in stereoselective reduction of the C5-C6 double bond to afford the required R-configured carboxylate group. Further enolization and oxidation at C5 by an unidentified enzyme affords the last intermediate that can undergo oxa-Michael cyclization to yield UCS1025A. The protein is Diels-Alderase ucsH of Acremonium sp.